The following is a 204-amino-acid chain: Kunitz type trypsin inhibitor 106 (204 aa).

The first 26 residues, 1 to 26 (MSMRLSIRTLIILAHVCLFITTTTIA), serve as a signal peptide directing secretion. N62 is a glycosylation site (N-linked (GlcNAc...) asparagine). An intrachain disulfide couples C65 to C112. An N-linked (GlcNAc...) asparagine glycan is attached at N141. 2 disulfide bridges follow: C164-C176 and C169-C172.

It belongs to the protease inhibitor I3 (leguminous Kunitz-type inhibitor) family. As to quaternary structure, interacts with SCP1 and CP. Expressed at low levels in non-mycorrhizal roots.

The protein localises to the secreted. The protein resides in the extracellular space. It is found in the apoplast. Protease inhibitor that, together with SCP1, controls mycorrhiza establishment and arbuscule development during root colonization by arbuscular mycorrhizal (AM) fungi (e.g. Rhizophagus irregularis), probably by degrading SCP1 in the apoplast of the periarbuscular region. In Medicago truncatula (Barrel medic), this protein is Kunitz type trypsin inhibitor 106.